The chain runs to 344 residues: Ras association domain-containing protein 1 (344 aa).

Serine 2 carries the N-acetylserine modification. The residue at position 2 (serine 2) is a Phosphoserine. The tract at residues 2 to 119 (SGEPELIELR…DLGWEPAVER (118 aa)) is mediates interaction with E4F1. Arginine 36 bears the Omega-N-methylarginine mark. A Phorbol-ester/DAG-type zinc finger spans residues 51 to 105 (GHRFQPAGPATHTWCDLCGDFIWGVVRKGLQCARLSADCKFTCHYRCRALVCLDC). Over residues 179 to 189 (SVPSSKKPPSL) the composition is skewed to low complexity. Residues 179–203 (SVPSSKKPPSLQDARRGPGRGTSVR) form a disordered region. Positions 198 to 292 (RGTSVRRRTS…LSFVLKENDS (95 aa)) constitute a Ras-associating domain. The 48-residue stretch at 294-341 (EVNWDAFSMPELHNFLRILQREEEEHLRQILQKYSYCRQKIQEALHAC) folds into the SARAH domain. The interval 315 to 318 (EEEE) is MOAP1-binding.

Interacts with MAP1S. Interacts with XPA. Binds to the N-terminal of CDC20 during prometaphase. Binds to STK3/MST2 and STK4/MST1. Recruited to the TNFRSF1A and TNFRSF10A complexes in response to their respective cognate ligand, after internalization. Can self-associate. Part of a complex with MDM2, DAXX, RASSF1 and USP7. Interacts with ECM2. In terms of assembly, interacts with MOAP1. Interacts with E4F1. Interacts with RSSF5 and probably associates with HRAS via a RSSF1 isoform A-RSSF5 heterodimer. Interacts (via C-terminus) with DAXX (via N-terminus); the interaction is independent of MDM2 and TP53. Interacts (via N-terminus) with MDM2 (via C-terminus); the interaction is independent of TP53. Interacts with RAB39A. Interacts with RAB39B; the interaction is weak. As to quaternary structure, interacts (via N-terminus) with DAXX. Interacts with RAB39B; the interaction is strong. Does not interact with RAB39A. Interacts (via N-terminus) with DAXX. In terms of tissue distribution, isoform A and isoform C are ubiquitously expressed in all tissues tested, however isoform A is absent in many corresponding cancer cell lines. Isoform B is mainly expressed in hematopoietic cells.

The protein resides in the cytoplasm. The protein localises to the cytoskeleton. It is found in the microtubule organizing center. It localises to the centrosome. Its subcellular location is the spindle. The protein resides in the spindle pole. The protein localises to the nucleus. Functionally, potential tumor suppressor. Required for death receptor-dependent apoptosis. Mediates activation of STK3/MST2 and STK4/MST1 during Fas-induced apoptosis by preventing their dephosphorylation. When associated with MOAP1, promotes BAX conformational change and translocation to mitochondrial membranes in response to TNF and TNFSF10 stimulation. Isoform A interacts with CDC20, an activator of the anaphase-promoting complex, APC, resulting in the inhibition of APC activity and mitotic progression. Inhibits proliferation by negatively regulating cell cycle progression at the level of G1/S-phase transition by regulating accumulation of cyclin D1 protein. Isoform C has been shown not to perform these roles, no function has been identified for this isoform. Isoform A disrupts interactions among MDM2, DAXX and USP7, thus contributing to the efficient activation of TP53 by promoting MDM2 self-ubiquitination in cell-cycle checkpoint control in response to DNA damage. This Homo sapiens (Human) protein is Ras association domain-containing protein 1.